The primary structure comprises 93 residues: Small ribosomal subunit protein uS19 (93 aa).

This sequence belongs to the universal ribosomal protein uS19 family.

Its function is as follows. Protein S19 forms a complex with S13 that binds strongly to the 16S ribosomal RNA. In Parafrankia sp. (strain EAN1pec), this protein is Small ribosomal subunit protein uS19.